The sequence spans 116 residues: Phosphoribosyl-AMP cyclohydrolase (116 aa).

Mg(2+) is bound at residue aspartate 80. Cysteine 81 contributes to the Zn(2+) binding site. Aspartate 82 and aspartate 84 together coordinate Mg(2+). Positions 98 and 105 each coordinate Zn(2+).

This sequence belongs to the PRA-CH family. Homodimer. Mg(2+) is required as a cofactor. It depends on Zn(2+) as a cofactor.

The protein resides in the cytoplasm. It carries out the reaction 1-(5-phospho-beta-D-ribosyl)-5'-AMP + H2O = 1-(5-phospho-beta-D-ribosyl)-5-[(5-phospho-beta-D-ribosylamino)methylideneamino]imidazole-4-carboxamide. It functions in the pathway amino-acid biosynthesis; L-histidine biosynthesis; L-histidine from 5-phospho-alpha-D-ribose 1-diphosphate: step 3/9. Functionally, catalyzes the hydrolysis of the adenine ring of phosphoribosyl-AMP. In Trichormus variabilis (strain ATCC 29413 / PCC 7937) (Anabaena variabilis), this protein is Phosphoribosyl-AMP cyclohydrolase.